The following is a 435-amino-acid chain: Centrosomal protein of 55 kDa (435 aa).

3 disordered regions span residues 1-63 (MAAK…TDKA), 213-239 (HKEAKSDDQSAQKVQQELEAERNKVSR), and 268-287 (ERRREREDRKSSVERDALLQ). Coiled coils occupy residues 18-140 (SSSS…KNKY) and 185-373 (EAYV…RESR). Basic and acidic residues-rich tracts occupy residues 26–49 (AELEVEKLKRENQQMKKSLEDMKR) and 213–222 (HKEAKSDDQS).

The protein resides in the cytoplasm. Its subcellular location is the cytoskeleton. It is found in the microtubule organizing center. It localises to the centrosome. The protein localises to the centriole. The protein resides in the cleavage furrow. Its subcellular location is the midbody. It is found in the midbody ring. Plays a role in mitotic exit and cytokinesis. Recruits PDCD6IP and TSG101 to midbody during cytokinesis. Required for successful completion of cytokinesis. Not required for microtubule nucleation. Plays a role in the development of the brain and kidney. The chain is Centrosomal protein of 55 kDa from Danio rerio (Zebrafish).